Here is a 1942-residue protein sequence, read N- to C-terminus: Myosin-2 (1942 aa).

One can recognise a Myosin N-terminal SH3-like domain in the interval 33-82; sequence DAKTSVFVAEPKESFVKGTIQSKDAGKVTVKTEAGATLTVKEDQIFPMNP. Residues threonine 64 and threonine 69 each carry the phosphothreonine modification. In terms of domain architecture, Myosin motor spans 86 to 785; sequence DKIEDMAMMT…LLGLLEEMRD (700 aa). 179–186 contributes to the ATP binding site; it reads GESGAGKT. The residue at position 389 (tyrosine 389) is a Phosphotyrosine. Position 419 is a phosphothreonine (threonine 419). Serine 625 is subject to Phosphoserine. The segment at 662 to 684 is actin-binding; sequence LNKLMTNLRSTHPHFVRCIIPNE. Histidine 760 carries the pros-methylhistidine modification. In terms of domain architecture, IQ spans 788 to 817; the sequence is LAQLITRTQAMCRGFLARVEYQKMVERRES. A coiled-coil region spans residues 849 to 1930; sequence SAETEKEMAT…ESQVNKLRVK (1082 aa). A phosphoserine mark is found at serine 1095 and serine 1099. The interval 1130–1175 is disordered; the sequence is EAERASRAKAEKQRSDLSRELEEISERLEEAGGATSAQIEMNKKRE. Over residues 1131–1159 the composition is skewed to basic and acidic residues; sequence AERASRAKAEKQRSDLSRELEEISERLEE. Phosphoserine is present on residues serine 1165 and serine 1240. Threonine 1244 carries the post-translational modification Phosphothreonine. Serine 1246 is modified (phosphoserine). Threonine 1258 is modified (phosphothreonine). Serine 1264 bears the Phosphoserine mark. Residue threonine 1289 is modified to Phosphothreonine. Residues serine 1291, serine 1295, serine 1306, and serine 1309 each carry the phosphoserine modification. Phosphotyrosine is present on tyrosine 1467. Threonine 1470 bears the Phosphothreonine mark. Serine 1477 bears the Phosphoserine mark. Residue tyrosine 1495 is modified to Phosphotyrosine. The residue at position 1498 (serine 1498) is a Phosphoserine. Phosphothreonine is present on threonine 1504. Serine 1517 carries the phosphoserine modification. A Phosphothreonine modification is found at threonine 1520. Phosphoserine occurs at positions 1557, 1577, 1603, 1606, 1717, and 1729. 2 positions are modified to phosphothreonine: threonine 1733 and threonine 1739. Serine 1742 carries the phosphoserine modification.

It belongs to the TRAFAC class myosin-kinesin ATPase superfamily. Myosin family. Muscle myosin is a hexameric protein that consists of 2 heavy chain subunits (MHC), 2 alkali light chain subunits (MLC) and 2 regulatory light chain subunits (MLC-2). Interacts with GCSAM. Expressed in type 2a myofibers in the tibialis anterior and soleus muscles (at protein level).

The protein localises to the cytoplasm. Its subcellular location is the myofibril. Myosins are actin-based motor molecules with ATPase activity essential for muscle contraction. The protein is Myosin-2 of Mus musculus (Mouse).